Here is a 730-residue protein sequence, read N- to C-terminus: Catalase-peroxidase 1 (730 aa).

The interval 1–24 (MQEKGKCPVTGMTKHKTSGGTTNQ) is disordered. Residues 95–218 (WHSAGTYRMG…LAAVQMGLIY (124 aa)) constitute a cross-link (tryptophyl-tyrosyl-methioninium (Trp-Tyr) (with M-244)). Histidine 96 acts as the Proton acceptor in catalysis. Positions 218-244 (YVNPEGPNGQPSALASGKDIRDTFARM) form a cross-link, tryptophyl-tyrosyl-methioninium (Tyr-Met) (with W-95). Histidine 259 is a heme b binding site.

Belongs to the peroxidase family. Peroxidase/catalase subfamily. Homodimer or homotetramer. It depends on heme b as a cofactor. Formation of the three residue Trp-Tyr-Met cross-link is important for the catalase, but not the peroxidase activity of the enzyme.

The catalysed reaction is H2O2 + AH2 = A + 2 H2O. It catalyses the reaction 2 H2O2 = O2 + 2 H2O. Its function is as follows. Bifunctional enzyme with both catalase and broad-spectrum peroxidase activity. The sequence is that of Catalase-peroxidase 1 from Alkaliphilus metalliredigens (strain QYMF).